The primary structure comprises 707 residues: MGEKQDPDKAYGKPAKYDPSFRGPIRNRSCTDIICCVLFFVFILGYIAVGLVAWVYGDPQQVLYPRNSSGAYCGIGENKDKPYLLYFNIFSCVLTTNIIAVAQNGLDCPTPQVCVSSCPAVSWTVATNQLSQTVGQVFYAANRSFCLPGVPGDMPVHQSLSQELCPSFLLPSSPALGRCFPWPNSTVPEVPEISNTSISQGISGLLDSLNARDISVKIFEDFAQSWYWILAALGVALVLSLLFVLLLRLVAGPLVFVLIIGVLGVLAYGIYHCWNEYRLLRDKGASISQLGFTTNLSAYSSVQETWLAALILLAVLEGILLLMLIFLRQRIRIAIALLEEASRAVGQMMSTLFYPLVTFVLLLVCIAYWAMTALYLATSGQPQYVLWAPNVSLAGCEKVMMNTSCDPMNQPVNSTCPGLMCVFQGYLSTGLVQRSLFNLQIYGVLGLFWTINWVLALGQCVLAGAFASFYWAFHKPRDIPTFPLSSAFIRTLRYHTGSLAFGALILTLVQIARAILEYIDHKLRGAQNPVARCIMCCFKCCLWCLEKFIKFLNRNAYIMIAIYGKNFCVSAKNAFMLLMRNIVRVVVLDKVTDLLLFFGKLLVVGGVGVLSFFFFTGRIQGLGKDFESPQLNYYWLPIMTSIMGAYVIASGFFSVFGMCVDTLFLCFLEDLERNDGSLDRPYYMSKALLKILGKKNEVPSGDKKRKK.

Topologically, residues Met1–Asp32 are cytoplasmic. The chain crosses the membrane as a helical span at residues Ile33–Ala53. Topologically, residues Trp54 to Trp226 are extracellular. 4 N-linked (GlcNAc...) asparagine glycosylation sites follow: Asn67, Asn142, Asn184, and Asn195. Residues Tyr227–Leu247 form a helical membrane-spanning segment. At Arg248–Leu249 the chain is on the cytoplasmic side. A helical transmembrane segment spans residues Val250 to Ile270. The Extracellular portion of the chain corresponds to Tyr271–Trp306. Residue Asn295 is glycosylated (N-linked (GlcNAc...) asparagine). A helical membrane pass occupies residues Leu307 to Leu327. The Cytoplasmic segment spans residues Arg328–Pro355. Residues Leu356–Leu376 form a helical membrane-spanning segment. The Extracellular segment spans residues Ala377 to Asn452. Asn390, Asn402, and Asn413 each carry an N-linked (GlcNAc...) asparagine glycan. Residues Trp453 to Phe473 form a helical membrane-spanning segment. Residues His474–Ser498 are Cytoplasmic-facing. The helical transmembrane segment at Leu499–Ile519 threads the bilayer. Topologically, residues Asp520–Tyr557 are extracellular. Residues Ile558 to Leu578 form a helical membrane-spanning segment. The Cytoplasmic segment spans residues Met579 to Leu594. The helical transmembrane segment at Leu595–Phe615 threads the bilayer. The Extracellular segment spans residues Thr616 to Trp635. The helical transmembrane segment at Leu636–Phe656 threads the bilayer. The Cytoplasmic portion of the chain corresponds to Gly657–Lys707.

It belongs to the CTL (choline transporter-like) family. N-glycosylated; N-glycosylation of Asn-677 and Asn-390 is required for a proper thiamine pyrophosphate uptake.

Its subcellular location is the membrane. It is found in the apical cell membrane. The catalysed reaction is choline(out) + n H(+)(in) = choline(in) + n H(+)(out). It carries out the reaction thiamine diphosphate(out) = thiamine diphosphate(in). Functionally, choline transporter that plays a role in the choline-acetylcholine system and is required to the efferent innervation of hair cells in the olivocochlear bundle for the maintenance of physiological function of outer hair cells and the protection of hair cells from acoustic injury. Also described as a thiamine pyrophosphate transporter in colon, may mediate the absorption of microbiota-generated thiamine pyrophosphate and contribute to host thiamine (vitamin B1) homeostasis. This chain is Choline transporter-like protein 4, found in Sus scrofa (Pig).